Here is a 1218-residue protein sequence, read N- to C-terminus: NACHT, LRR and PYD domains-containing protein 1a allele 1 (1218 aa).

A disordered region spans residues 1 to 61 (MEESQSKQES…SLPGWSSTSN (61 aa)). The segment covering 7–29 (KQESNTRVAQHGSQQDVDPTFQT) has biased composition (polar residues). Residues 175 to 484 (QLVIIEGAAG…EFFAAMSYIL (310 aa)) enclose the NACHT domain. Position 181 to 188 (181 to 188 (GAAGIGKS)) interacts with ATP. LRR repeat units follow at residues 343 to 364 (KERN…LTLC), 673 to 693 (NLEE…RSLC), and 730 to 750 (RLAE…RQLC). Residues 799-815 (TMPTENTDGEESLTSSK) are compositionally biased toward polar residues. Residues 799–842 (TMPTENTDGEESLTSSKQQQQQSGDKHMEPLGTDDDFWGPSGPV) are disordered. The interval 835–968 (FWGPSGPVST…HFAVLENPSF (134 aa)) is ZU5. Residues 835-1118 (FWGPSGPVST…LRPALPRMAS (284 aa)) form the FIIND domain. The tract at residues 969–1118 (SPMGVLLRMI…LRPALPRMAS (150 aa)) is UPA. One can recognise a CARD domain in the interval 1122 to 1211 (DAPALLHFVD…HLIMDLLEKS (90 aa)).

The protein belongs to the NLRP family. As to quaternary structure, interacts (via LRR repeats) with BCL2 and BCL2L1 (via the loop between motifs BH4 and BH3). Interacts with NOD2; this interaction is enhanced in the presence of muramyl dipeptide (MDP) and increases IL1B release. Interacts with EIF2AK2/PKR; this interaction requires EIF2AK2 activity, is accompanied by EIF2AK2 autophosphorylation and promotes inflammasome assembly in response to danger-associated signals. Interacts with MEFV; this interaction targets Nlrp1a to degradation by autophagy, hence preventing excessive IL1B- and IL18-mediated inflammation. Interacts with DPP9; leading to inhibit activation of the inflammasome. DPP9 acts via formation of a ternary complex, composed of a DPP9 homodimer, one full-length NLRP1 protein, and one cleaved C-terminus of Nlrp1a (NACHT, LRR and PYD domains-containing protein 1a, C-terminus). Interacts with DPP8; leading to inhibit activation of the inflammasome, probably via formation of a ternary complex with DPP8. Interacts with the C-terminal part of Nlrp1a (NACHT, LRR and PYD domains-containing protein 1a, C-terminus) in absence of pathogens and other damage-associated signals. In terms of assembly, interacts with the N-terminal part of Nlrp1a (NACHT, LRR and PYD domains-containing protein 1a, N-terminus) in absence of pathogens and other damage-associated signals. Homomultimer; forms the Nlrp1a inflammasome polymeric complex, a filament composed of homopolymers of this form in response to pathogens and other damage-associated signals. The Nlrp1a inflammasome polymeric complex directly recruits pro-caspase-1 (proCASP1) independently of PYCARD/ASC. Interacts (via CARD domain) with CASP1 (via CARD domain); leading to CASP1 activation. Post-translationally, autocatalytically cleaved. Autocatalytic cleavage in FIIND region occurs constitutively, prior to activation signals, and is required for inflammasome activity (IL1B release), possibly by facilitating CASP1 binding. Both N- and C-terminal parts remain associated non-covalently. (Microbial infection) Cleavage by B.anthracis lethal toxin (LT) endopeptidase promotes ubiquitination and degradation of the N-terminal part, releasing the cleaved C-terminal part of the protein (NACHT, LRR and PYD domains-containing protein 1a, C-terminus), which polymerizes and forms the Nlrp1a inflammasome. In terms of processing, ubiquitinated in response to pathogen-associated signals, leading to its degradation by the proteasome and subsequent release of the cleaved C-terminal part of the protein (NACHT, LRR and PYD domains-containing protein 1a, C-terminus), which polymerizes and forms the Nlrp1a inflammasome.

It localises to the cytoplasm. The protein localises to the cytosol. Its subcellular location is the nucleus. It is found in the inflammasome. Activated by cleavage by B.anthracis lethal toxin (LT) endopeptidase. Cleavage by LT promotes ubiquitination and degradation of the N-terminal part, releasing the cleaved C-terminal part of the protein (NACHT, LRR and PYD domains-containing protein 1a, C-terminus), which polymerizes and forms the Nlrp1a inflammasome. Nlrp1a inflammasome is inhibited by DPP8 and DPP9, which sequester the C-terminal fragment of Nlrp1a (NACHT, LRR and PYD domains-containing protein 1a, C-terminus) in a ternary complex, thereby preventing Nlrp1a oligomerization and activation. Nlrp1a inflammasome is weakly activated by Val-boroPro (Talabostat, PT-100), an inhibitor of dipeptidyl peptidases DPP8 and DPP9. Val-boroPro relieves inhibition of DPP8 and/or DPP9 by promoting disruption of the ternary complex, releasing its C-terminal part from autoinhibition. Weakly activated by Toxoplasma gondii. In terms of biological role, acts as the sensor component of the Nlrp1a inflammasome, which mediates inflammasome activation in response to various pathogen-associated signals, leading to subsequent pyroptosis. Inflammasomes are supramolecular complexes that assemble in the cytosol in response to pathogens and other damage-associated signals and play critical roles in innate immunity and inflammation. Acts as a recognition receptor (PRR): recognizes specific pathogens and other damage-associated signals, such as B.anthracis lethal toxin (LT) or Val-boroPro inhibitor, and mediates the formation of the inflammasome polymeric complex. In response to pathogen-associated signals, the N-terminal part of Nlrp1a is degraded by the proteasome, releasing the cleaved C-terminal part of the protein (NACHT, LRR and PYD domains-containing protein 1a, C-terminus), which polymerizes to initiate the formation of the inflammasome complex: the inflammasome directly recruits pro-caspase-1 (proCASP1) independently of PYCARD/ASC and promotes caspase-1 (CASP1) activation, which subsequently cleaves and activates inflammatory cytokines IL1B and IL18 and gasdermin-D (GSDMD), leading to pyroptosis. In the absence of GSDMD expression, the Nlrp1a inflammasome is able to recruit and activate CASP8, leading to activation of gasdermin-E (GSDME). Functionally, constitutes the precursor of the Nlrp1a inflammasome, which mediates autoproteolytic processing within the FIIND domain to generate the N-terminal and C-terminal parts, which are associated non-covalently in absence of pathogens and other damage-associated signals. Regulatory part that prevents formation of the Nlrp1a inflammasome: in absence of pathogens and other damage-associated signals, interacts with the C-terminal part of Nlrp1a (NACHT, LRR and PYD domains-containing protein 1a, C-terminus), preventing activation of the Nlrp1a inflammasome. In response to pathogen-associated signals, this part is ubiquitinated by the N-end rule pathway and degraded by the proteasome, releasing the cleaved C-terminal part of the protein, which polymerizes and forms the Nlrp1a inflammasome. Its function is as follows. Constitutes the active part of the Nlrp1a inflammasome. In absence of pathogens and other damage-associated signals, interacts with the N-terminal part of Nlrp1a (NACHT, LRR and PYD domains-containing protein 1a, N-terminus), preventing activation of the Nlrp1a inflammasome. In response to pathogen-associated signals, the N-terminal part of Nlrp1a is degraded by the proteasome, releasing this form, which polymerizes to form the Nlrp1a inflammasome complex: the Nlrp1a inflammasome complex then directly recruits pro-caspase-1 (proCASP1) and promotes caspase-1 (CASP1) activation, leading to gasdermin-D (GSDMD) cleavage and subsequent pyroptosis. The chain is NACHT, LRR and PYD domains-containing protein 1a allele 1 from Rattus norvegicus (Rat).